Consider the following 343-residue polypeptide: Protease HtpX homolog (343 aa).

Helical transmembrane passes span 7-24 (TMLLAFMTALFMGVGYLV) and 29-46 (GMVVALFIAGGLNFFSYW). H130 is a Zn(2+) binding site. Residue E131 is part of the active site. A Zn(2+)-binding site is contributed by H134. 2 helical membrane passes run 145-165 (LTATIAGAISMLGNFALLMGM) and 177-197 (GAGMLGTVIALFVAPFAAMLV). Residue E206 participates in Zn(2+) binding. Positions 308–343 (NLEDEDLNPEAQNGFTHNQKKKTVRRGKDRPTWLRH) are disordered. Residues 325–335 (NQKKKTVRRGK) are compositionally biased toward basic residues.

The protein belongs to the peptidase M48B family. Zn(2+) serves as cofactor.

It is found in the cell inner membrane. In Bartonella bacilliformis (strain ATCC 35685 / KC583 / Herrer 020/F12,63), this protein is Protease HtpX homolog.